The sequence spans 278 residues: HTH-type transcriptional activator RhaS (278 aa).

Residues 174 to 272 (NLLLAWLEDH…NWSPRDIRQG (99 aa)) enclose the HTH araC/xylS-type domain. DNA-binding regions (H-T-H motif) lie at residues 191 to 212 (DAVAEQFSLSLRTLHRQLKQQT) and 239 to 262 (VTDIAYRCGFSDSNHFSTLFRREF).

In terms of assembly, binds DNA as a dimer.

It localises to the cytoplasm. In terms of biological role, activates expression of the rhaBAD and rhaT operons. The protein is HTH-type transcriptional activator RhaS of Escherichia coli O139:H28 (strain E24377A / ETEC).